A 304-amino-acid polypeptide reads, in one-letter code: Methionyl-tRNA formyltransferase (304 aa).

110–113 (SLLP) is a binding site for (6S)-5,6,7,8-tetrahydrofolate.

It belongs to the Fmt family.

The enzyme catalyses L-methionyl-tRNA(fMet) + (6R)-10-formyltetrahydrofolate = N-formyl-L-methionyl-tRNA(fMet) + (6S)-5,6,7,8-tetrahydrofolate + H(+). In terms of biological role, attaches a formyl group to the free amino group of methionyl-tRNA(fMet). The formyl group appears to play a dual role in the initiator identity of N-formylmethionyl-tRNA by promoting its recognition by IF2 and preventing the misappropriation of this tRNA by the elongation apparatus. This Gluconobacter oxydans (strain 621H) (Gluconobacter suboxydans) protein is Methionyl-tRNA formyltransferase.